We begin with the raw amino-acid sequence, 86 residues long: UPF0512 protein V (86 aa).

This sequence belongs to the UPF0512 family.

In Dictyostelium discoideum (Social amoeba), this protein is UPF0512 protein V.